Consider the following 1956-residue polypeptide: Sodium channel protein type 10 subunit alpha (1956 aa).

Residues 1–125 (MELPFASVGT…FNLIRRTAIK (125 aa)) lie on the Cytoplasmic side of the membrane. The interval 31 to 54 (HRAAKKARTKHRGQEDKGEKPRPQ) is disordered. Residues 32-41 (RAAKKARTKH) are compositionally biased toward basic residues. A compositionally biased stretch (basic and acidic residues) spans 42 to 54 (RGQEDKGEKPRPQ). An I repeat occupies 116-404 (FNLIRRTAIK…VTMAYEEQSQ (289 aa)). A helical transmembrane segment spans residues 126-149 (VSVHSWFSIFITITILVNCVCMTR). The Extracellular segment spans residues 150–154 (TDLPE). Residues 155 to 174 (KVEYVFTVIYTFEALIKILA) form a helical membrane-spanning segment. The Cytoplasmic portion of the chain corresponds to 175–187 (RGFCLNEFTYLRD). Residues 188-206 (PWNWLDFSVITLAYVGAAI) traverse the membrane as a helical segment. Residues 207–212 (DLRGIS) lie on the Extracellular side of the membrane. A helical; Voltage-sensor membrane pass occupies residues 213-232 (GLRTFRVLRALKTVSVIPGL). The Cytoplasmic segment spans residues 233-248 (KVIVGALIHSVRKLAD). The chain crosses the membrane as a helical span at residues 249 to 272 (VTILTVFCLSVFALVGLQLFKGNL). Residues 273–340 (KNKCIRNGTD…PDFNYTSFDS (68 aa)) lie on the Extracellular side of the membrane. Cys276 and Cys318 form a disulfide bridge. Residues Asn279, Asn288, Asn311, and Asn334 are each glycosylated (N-linked (GlcNAc...) asparagine). The segment at residues 341–365 (FAWAFLSLFRLMTQDSWERLYQQTL) is an intramembrane region (pore-forming). The Extracellular portion of the chain corresponds to 366-372 (RASGKMY). A helical membrane pass occupies residues 373-398 (MVFFVLVIFLGSFYLVNLILAVVTMA). Residues 399–658 (YEEQSQATIA…KWRKFKMALF (260 aa)) lie on the Cytoplasmic side of the membrane. Ser440, Ser443, Ser466, and Ser478 each carry phosphoserine. Residues 441 to 453 (LQSHSGSPLASKN) show a composition bias toward polar residues. 2 disordered regions span residues 441–484 (LQSH…YNQR) and 537–581 (LLGR…AGAP). Over residues 475–484 (SPQSDPYNQR) the composition is skewed to polar residues. Phosphoserine is present on residues Ser611 and Ser614. The stretch at 646-910 (CCPKWRKFKM…EDDGEVNNLQ (265 aa)) is one II repeat. Residues 659-683 (ELVTDPFAELTITLCIVVNTVFMAM) form a helical membrane-spanning segment. At 684-694 (EHYPMTDAFDA) the chain is on the extracellular side. Residues 695–718 (MLQAGNIVFTVFFTMEMAFKIIAF) traverse the membrane as a helical segment. The Cytoplasmic segment spans residues 719–726 (DPYYYFQK). The chain crosses the membrane as a helical span at residues 727 to 746 (KWNIFDCVIVTVSLLELSAS). Residues 747–752 (KKGSLS) are Extracellular-facing. Residues 753–772 (VLRTFRLLRVFKLAKSWPTL) form a helical; Voltage-sensor membrane-spanning segment. The Cytoplasmic portion of the chain corresponds to 773 to 788 (NTLIKIIGNSVGALGN). Residues 789–809 (LTFILAIIVFIFALVGKQLLS) form a helical membrane-spanning segment. Over 810–833 (EDYGCRKDGVSVWNGEKLRWHMCD) the chain is Extracellular. The pore-forming intramembrane region spans 834-854 (FFHSFLVVFRILCGEWIENMW). Topologically, residues 855–863 (VCMEVSQKS) are extracellular. A disulfide bridge connects residues Cys856 and Cys865. A helical membrane pass occupies residues 864–889 (ICLILFLTVMVLGNLVVLNLFIALLL). At 890 to 1148 (NSFSADNLTA…GWQVRKTCYR (259 aa)) the chain is on the cytoplasmic side. Positions 1008–1094 (DELEEDMEQA…SEGSTVDCPD (87 aa)) are disordered. The III repeat unit spans residues 1141 to 1450 (QVRKTCYRIV…KKYYNAMKKL (310 aa)). The chain crosses the membrane as a helical span at residues 1149–1172 (IVEHSWFESFIIFMILLSSGALAF). The Extracellular segment spans residues 1173-1185 (EDNYLEEKPRVKS). A helical transmembrane segment spans residues 1186 to 1211 (VLEYTDRVFTFIFVFEMLLKWVAYGF). The Cytoplasmic portion of the chain corresponds to 1212–1217 (KKYFTN). Residues 1218-1239 (AWCWLDFLIVNISLTSLIAKIL) traverse the membrane as a helical segment. Over 1240–1243 (EYSD) the chain is Extracellular. A helical; Voltage-sensor membrane pass occupies residues 1244–1265 (VASIKALRTLRALRPLRALSRF). Topologically, residues 1266–1284 (EGMRVVVDALVGAIPSIMN) are cytoplasmic. Residues 1285–1312 (VLLVCLIFWLIFSIMGVNLFAGKFSKCV) form a helical membrane-spanning segment. Over 1313-1354 (DTRNNPFSNVNSTMVNNKSECHNQNSTGHFFWVNVKVNFDNV) the chain is Extracellular. 3 N-linked (GlcNAc...) asparagine glycosylation sites follow: Asn1323, Asn1329, and Asn1337. Residues 1355 to 1376 (AMGYLALLQVATFKGWMDIMYA) constitute an intramembrane region (pore-forming). Topologically, residues 1377–1392 (AVDSGEINSQPNWENN) are extracellular. The chain crosses the membrane as a helical span at residues 1393–1419 (LYMYLYFVVFIIFGGFFTLNLFVGVII). Topologically, residues 1420-1472 (DNFNQQKKKLGGQDIFMTEEQKKYYNAMKKLGSKKPQKPIPRPLNKYQGFVFD) are cytoplasmic. Phosphoserine; by PKC is present on Ser1452. One copy of the IV repeat lies at 1459–1758 (IPRPLNKYQG…WEKFDPEATQ (300 aa)). Residues 1473–1496 (IVTRQAFDIIIMVLICLNMITMMV) traverse the membrane as a helical segment. Residues 1497–1507 (ETDEQGEEKTK) lie on the Extracellular side of the membrane. A helical membrane pass occupies residues 1508 to 1531 (VLGRINQFFVAVFTGECVMKMFAL). The Cytoplasmic portion of the chain corresponds to 1532–1537 (RQYYFT). A helical transmembrane segment spans residues 1538–1561 (NGWNVFDFIVVILSIGSLLFSAIL). Topologically, residues 1562 to 1573 (KSLENYFSPTLF) are extracellular. The helical; Voltage-sensor transmembrane segment at 1574-1595 (RVIRLARIGRILRLIRAAKGIR) threads the bilayer. The Cytoplasmic portion of the chain corresponds to 1596–1610 (TLLFALMMSLPALFN). The helical transmembrane segment at 1611–1633 (IGLLLFLVMFIYSIFGMASFANV) threads the bilayer. At 1634–1647 (VDEAGIDDMFNFKT) the chain is on the extracellular side. The pore-forming intramembrane region spans 1648-1670 (FGNSMLCLFQITTSAGWDGLLSP). Residues 1671 to 1698 (ILNTGPPYCDPNLPNSNGSRGNCGSPAV) lie on the Extracellular side of the membrane. An N-linked (GlcNAc...) asparagine glycan is attached at Asn1687. A helical membrane pass occupies residues 1699 to 1723 (GIIFFTTYIIISFLIVVNMYIAVIL). At 1724–1956 (ENFNVATEES…AKEGNSPGPQ (233 aa)) the chain is on the cytoplasmic side. Residues 1852-1881 (EDLSATVIQKAYRSYMLHRSLTLSNTLHVP) enclose the IQ domain. The segment at 1906–1956 (DKSETASATSFPPSYDSVTRGLSDRANINPSSSMQNEDEVAAKEGNSPGPQ) is disordered. Positions 1931–1940 (ANINPSSSMQ) are enriched in polar residues.

Belongs to the sodium channel (TC 1.A.1.10) family. Nav1.8/SCN10A subfamily. As to quaternary structure, the channel consists of an ion conducting pore forming alpha-subunit regulated by one or more associated auxiliary subunits SCN1B, SCN2B and SCN3B; electrophysiological properties may vary depending on the type of the associated beta subunits. Found in a number of complexes with PRX, DYNLT1 and PDZD2. Interacts with proteins such as FSTL1, PRX, DYNLT1, PDZD2, S100A10 and many others. Interacts with NEDD4 and NEDD4L. Ubiquitinated by NEDD4L; which promotes its endocytosis. In terms of processing, phosphorylation at Ser-1452 by PKC in a highly conserved cytoplasmic loop slows inactivation of the sodium channel and reduces peak sodium currents. Post-translationally, lacks the cysteine which covalently binds the conotoxin GVIIJ. This cysteine (position 815) is speculated in other sodium channel subunits alpha to be implied in covalent binding with the sodium channel subunit beta-2 or beta-4. Expressed in dorsal root ganglia, trigeminal ganglia, nodose ganglia and sciatic nerve.

It is found in the cell membrane. It carries out the reaction Na(+)(in) = Na(+)(out). Its function is as follows. Tetrodotoxin-resistant channel that mediates the voltage-dependent sodium ion permeability of excitable membranes. Assuming opened or closed conformations in response to the voltage difference across the membrane, the protein forms a sodium-selective channel through which sodium ions may pass in accordance with their electrochemical gradient. Plays a role in neuropathic pain mechanisms. The sequence is that of Sodium channel protein type 10 subunit alpha from Rattus norvegicus (Rat).